Here is a 156-residue protein sequence, read N- to C-terminus: Calmodulin (156 aa).

N-acetylserine is present on Ser2. EF-hand domains follow at residues 15-50 (EQIA…LGQN), 51-86 (PTEA…KMKD), 88-123 (DSEE…LGEK), and 124-156 (LTDE…MTSK). Ca(2+)-binding residues include Asp28, Asp30, Asp32, Thr34, Glu39, Asp64, Asp66, Asn68, Thr70, Glu75, Asp101, Asp103, Asn105, and Glu112. Position 123 is an N6,N6,N6-trimethyllysine (Lys123). Asp137, Asp139, Asp141, Gln143, and Glu148 together coordinate Ca(2+).

The protein belongs to the calmodulin family.

In terms of biological role, calmodulin mediates the control of a large number of enzymes, ion channels and other proteins by Ca(2+). Among the enzymes to be stimulated by the calmodulin-Ca(2+) complex are a number of protein kinases and phosphatases. This chain is Calmodulin, found in Strongylocentrotus intermedius (Sea urchin).